The following is a 122-amino-acid chain: UPF0102 protein XAC0764 (122 aa).

Belongs to the UPF0102 family.

The sequence is that of UPF0102 protein XAC0764 from Xanthomonas axonopodis pv. citri (strain 306).